The chain runs to 165 residues: Nucleotide-binding protein Chy400_2003 (165 aa).

It belongs to the YajQ family.

Functionally, nucleotide-binding protein. The chain is Nucleotide-binding protein Chy400_2003 from Chloroflexus aurantiacus (strain ATCC 29364 / DSM 637 / Y-400-fl).